The primary structure comprises 309 residues: Ferrochelatase (309 aa).

The Fe cation site is built by histidine 185 and glutamate 264.

Belongs to the ferrochelatase family.

The protein localises to the cytoplasm. It catalyses the reaction heme b + 2 H(+) = protoporphyrin IX + Fe(2+). Its pathway is porphyrin-containing compound metabolism; protoheme biosynthesis; protoheme from protoporphyrin-IX: step 1/1. In terms of biological role, catalyzes the ferrous insertion into protoporphyrin IX. In Aquifex aeolicus (strain VF5), this protein is Ferrochelatase.